The following is a 610-amino-acid chain: MLKIKALFSKKKPDQADLSQESKKPFKGKTRSSGTNNKDVSQITSSPKKSFQDKNIVQYPSVVADDHHMKSLTDELVTTIDSDSSPSDNITTENVETVTSVPAIDVHESSEGQLSSDPLISDESLSEQSEIISDIQDDSTDDDNMEDEIPEKSFLEQKELIGYKLINKIGEGAFSKVFRAIPAKNSSNEFLTKNYKAVAIKVIKKADLSSINGDHRKKDKGKDSTKTSSRDQVLKEVALHKTVSAGCSQIVAFIDFQETDSYYYIIQELLTGGEIFGEIVRLTYFSEDLSRHVIKQLALAVKHMHSLGVVHRDIKPENLLFEPIEFTRSIKPKLRKSDDPQTKADEGIFTPGVGGGGIGIVKLADFGLSKQIFSKNTKTPCGTVGYTAPEVVKDEHYSMKVDMWGIGCVLYTMLCGFPPFYDEKIDTLTEKISRGEYTFLKPWWDEISAGAKNAVAKLLELEPSKRYDIDQFLDDPWLNTFDCLPKEGESSQKKAGTSERRHPHKKQFQLFQRDSSLLFSPAAVAMRDAFDIGNAVKRTEEDRMGTRGGLGSLAEDEELEDSYSGAQGDEQLEQNMFQLTLDTSTILQRRKKVQENDVGPTIPISATIRE.

2 disordered regions span residues 1-55 (MLKI…QDKN) and 99-127 (TSVP…SLSE). Over residues 11–24 (KKPDQADLSQESKK) the composition is skewed to basic and acidic residues. Positions 31 to 55 (RSSGTNNKDVSQITSSPKKSFQDKN) are enriched in polar residues. 2 positions are modified to phosphoserine: serine 46 and serine 50. One can recognise a Protein kinase domain in the interval 163–478 (YKLINKIGEG…IDQFLDDPWL (316 aa)). Position 169–177 (169–177 (IGEGAFSKV)) interacts with ATP. A Phosphoserine modification is found at serine 187. Lysine 201 contacts ATP. The active-site Proton acceptor is the aspartate 313. Threonine 350 is modified (phosphothreonine). Residues 493–506 (KKAGTSERRHPHKK) form a calmodulin-binding region. Serine 520 carries the post-translational modification Phosphoserine. A disordered region spans residues 541–564 (EDRMGTRGGLGSLAEDEELEDSYS).

Belongs to the protein kinase superfamily. CAMK Ser/Thr protein kinase family. CaMK subfamily. Autophosphorylated. Phosphorylated by HOG1 at Ser-520 after osmotic stress.

Its subcellular location is the cytoplasm. The catalysed reaction is L-seryl-[protein] + ATP = O-phospho-L-seryl-[protein] + ADP + H(+). It catalyses the reaction L-threonyl-[protein] + ATP = O-phospho-L-threonyl-[protein] + ADP + H(+). Activated by Ser-520 phosphorylation by HOG1. Functionally, serine/threonine-protein kinase involved in a signal transduction pathway that is activated by changes in the osmolarity of the extracellular environment. This chain is Serine/threonine-protein kinase RCK2 (RCK2), found in Saccharomyces cerevisiae (strain ATCC 204508 / S288c) (Baker's yeast).